The following is a 311-amino-acid chain: Methenyltetrahydromethanopterin cyclohydrolase (311 aa).

It belongs to the MCH family.

Its subcellular location is the cytoplasm. It catalyses the reaction 5,10-methenyl-5,6,7,8-tetrahydromethanopterin + H2O = N(5)-formyl-5,6,7,8-tetrahydromethanopterin + H(+). Its function is as follows. Catalyzes the hydrolysis of methenyl-H(4)MPT(+) to 5-formyl-H(4)MPT. The polypeptide is Methenyltetrahydromethanopterin cyclohydrolase (Halobacterium salinarum (strain ATCC 29341 / DSM 671 / R1)).